The sequence spans 90 residues: DNA/RNA-binding protein Alba (90 aa).

An N6-acetyllysine modification is found at Lys-8.

The protein belongs to the histone-like Alba family. Post-translationally, acetylated. Acetylation at Lys-8 decreases DNA-binding affinity.

The protein resides in the cytoplasm. Its subcellular location is the chromosome. Binds double-stranded DNA tightly but without sequence specificity. Involved in DNA compaction. This is DNA/RNA-binding protein Alba from Nanoarchaeum equitans (strain Kin4-M).